The primary structure comprises 134 residues: Translation initiation factor 2 subunit beta (134 aa).

It belongs to the eIF-2-beta/eIF-5 family. Heterotrimer composed of an alpha, a beta and a gamma chain.

EIF-2 functions in the early steps of protein synthesis by forming a ternary complex with GTP and initiator tRNA. This is Translation initiation factor 2 subunit beta from Pyrobaculum aerophilum (strain ATCC 51768 / DSM 7523 / JCM 9630 / CIP 104966 / NBRC 100827 / IM2).